The sequence spans 368 residues: WD repeat-containing protein wdr-5.1 (368 aa).

Residues Met1–Ile64 are disordered. The span at Pro16–Pro42 shows a compositional bias: low complexity. WD repeat units follow at residues Gly77–Thr116, Gly119–Thr158, Gly161–Thr200, Ala203–Thr242, Asp246–Gln285, Gly288–Ser330, and Gly333–Ser368.

The sequence is that of WD repeat-containing protein wdr-5.1 from Caenorhabditis briggsae.